The chain runs to 803 residues: Ribonucleoside-diphosphate reductase large chain (803 aa).

Positions Met1–Ser91 constitute an ATP-cone domain. ATP contacts are provided by residues Asn5–Arg6, Glu11–Gln17, Thr52, and Asp56. Residue Ser215 coordinates GDP. Cys216 and Cys442 are joined by a disulfide. Residues Asp224–Ile226, Lys241, Arg254, and Arg261–Gly262 contribute to the dTTP site. Asn425 contacts GDP. The active-site Proton acceptor is the Asn425. The Cysteine radical intermediate role is filled by Cys427. GDP is bound by residues Glu429 and Thr604 to Thr607. Glu429 acts as the Proton acceptor in catalysis.

It belongs to the ribonucleoside diphosphate reductase large chain family. In terms of assembly, heterodimer of a large and a small subunit.

The catalysed reaction is a 2'-deoxyribonucleoside 5'-diphosphate + [thioredoxin]-disulfide + H2O = a ribonucleoside 5'-diphosphate + [thioredoxin]-dithiol. Under complex allosteric control mediated by deoxynucleoside triphosphates and ATP binding to separate specificity and activation sites on the large subunit. The type of nucleotide bound at the specificity site determines substrate preference. It seems probable that ATP makes the enzyme reduce CDP and UDP, dGTP favors ADP reduction and dTTP favors GDP reduction. Stimulated by ATP and inhibited by dATP binding to the activity site. Its function is as follows. Provides the precursors necessary for DNA synthesis. Catalyzes the biosynthesis of deoxyribonucleotides from the corresponding ribonucleotides. The sequence is that of Ribonucleoside-diphosphate reductase large chain (RNR1) from Cryptosporidium parvum.